The primary structure comprises 142 residues: Large ribosomal subunit protein uL11 (142 aa).

The protein belongs to the universal ribosomal protein uL11 family. As to quaternary structure, part of the ribosomal stalk of the 50S ribosomal subunit. Interacts with L10 and the large rRNA to form the base of the stalk. L10 forms an elongated spine to which L12 dimers bind in a sequential fashion forming a multimeric L10(L12)X complex. In terms of processing, one or more lysine residues are methylated.

Its function is as follows. Forms part of the ribosomal stalk which helps the ribosome interact with GTP-bound translation factors. The sequence is that of Large ribosomal subunit protein uL11 from Rhodospirillum rubrum (strain ATCC 11170 / ATH 1.1.1 / DSM 467 / LMG 4362 / NCIMB 8255 / S1).